Reading from the N-terminus, the 144-residue chain is Protein MIX23 (144 aa).

An N-acetylalanine modification is found at alanine 2. Residues 82 to 120 are a coiled coil; that stretch reads VKNLREEREKNLDDLTLLKQLRKEQTKLKWMQSELNVEE. Lysine 100 is subject to N6-acetyllysine.

It belongs to the MIX23 family.

This is Protein MIX23 from Homo sapiens (Human).